A 298-amino-acid chain; its full sequence is MSLKLDGKKLSLEIEEKLKKDIESNINSTKRPPGLAVIRIGEDPASGVYVKNKERACARVGIKSFIFHLKDTIDQKEVEQLINKLNLDNDIDGMLLQLPIPDKFDEQRLISLINPDKDVDGLNEKNIGKLVKNEPGMRSCTPAGIVNLLRSQNITIEGKKIVVVGRSLLVGKPLSLMLLNLNGTVTITHSKTINLKKICKEADILIAAAGKPNLINSSYVKDGAVIIDVGIHRLTSSDKSQTKLCGDVLLEDVIPKVYAYTPVPGGVGPMTVTMLLVNTIFSWQKQFVLLSRLSDLLP.

Residues 165 to 167 (GRS), Ser-190, and Ile-231 contribute to the NADP(+) site.

This sequence belongs to the tetrahydrofolate dehydrogenase/cyclohydrolase family. As to quaternary structure, homodimer.

It carries out the reaction (6R)-5,10-methylene-5,6,7,8-tetrahydrofolate + NADP(+) = (6R)-5,10-methenyltetrahydrofolate + NADPH. The enzyme catalyses (6R)-5,10-methenyltetrahydrofolate + H2O = (6R)-10-formyltetrahydrofolate + H(+). Its pathway is one-carbon metabolism; tetrahydrofolate interconversion. In terms of biological role, catalyzes the oxidation of 5,10-methylenetetrahydrofolate to 5,10-methenyltetrahydrofolate and then the hydrolysis of 5,10-methenyltetrahydrofolate to 10-formyltetrahydrofolate. In Prochlorococcus marinus (strain MIT 9515), this protein is Bifunctional protein FolD.